A 947-amino-acid polypeptide reads, in one-letter code: Protein translocase subunit SecA (947 aa).

Residues glutamine 85, 103–107 (GEGKT), and aspartate 514 contribute to the ATP site. The disordered stretch occupies residues 864–947 (AAPSLDKGAQ…QAKGGRRRKK (84 aa)). Basic and acidic residues predominate over residues 884 to 900 (PEIRAKGLDAPQRRDLH). A compositionally biased stretch (basic residues) spans 934-947 (ERRKQAKGGRRRKK).

The protein belongs to the SecA family. As to quaternary structure, monomer and homodimer. Part of the essential Sec protein translocation apparatus which comprises SecA, SecYEG and auxiliary proteins SecDF. Other proteins may also be involved.

The protein resides in the cell membrane. The protein localises to the cytoplasm. It carries out the reaction ATP + H2O + cellular proteinSide 1 = ADP + phosphate + cellular proteinSide 2.. Functionally, part of the Sec protein translocase complex. Interacts with the SecYEG preprotein conducting channel. Has a central role in coupling the hydrolysis of ATP to the transfer of proteins into and across the cell membrane, serving as an ATP-driven molecular motor driving the stepwise translocation of polypeptide chains across the membrane. The sequence is that of Protein translocase subunit SecA from Streptomyces lividans.